Reading from the N-terminus, the 715-residue chain is Fatty acid oxidation complex subunit alpha (715 aa).

The segment at 8 to 197 (NSQPSAFSLT…NLGLVEEAVP (190 aa)) is enoyl-CoA hydratase. A 3-hydroxyacyl-CoA dehydrogenase region spans residues 313-715 (ATIKKVGVLG…MANEEQSFYS (403 aa)).

It in the N-terminal section; belongs to the enoyl-CoA hydratase/isomerase family. This sequence in the central section; belongs to the 3-hydroxyacyl-CoA dehydrogenase family. Heterotetramer of two alpha chains (FadJ) and two beta chains (FadI).

Its subcellular location is the cytoplasm. The enzyme catalyses a (3S)-3-hydroxyacyl-CoA = a (2E)-enoyl-CoA + H2O. It carries out the reaction a 4-saturated-(3S)-3-hydroxyacyl-CoA = a (3E)-enoyl-CoA + H2O. It catalyses the reaction a (3S)-3-hydroxyacyl-CoA + NAD(+) = a 3-oxoacyl-CoA + NADH + H(+). The catalysed reaction is (3S)-3-hydroxybutanoyl-CoA = (3R)-3-hydroxybutanoyl-CoA. It functions in the pathway lipid metabolism; fatty acid beta-oxidation. Functionally, catalyzes the formation of a hydroxyacyl-CoA by addition of water on enoyl-CoA. Also exhibits 3-hydroxyacyl-CoA epimerase and 3-hydroxyacyl-CoA dehydrogenase activities. This chain is Fatty acid oxidation complex subunit alpha, found in Photobacterium profundum (strain SS9).